The following is a 155-amino-acid chain: MPSTSMIEDRSEIERRRFEYLDHPADIQLHSWGSTMEEAFEACLVSMFGYMTDLAKVDEMYEFYWKASGDSLDGLLFQFLDEALNSFHAEPCFVAKRVEILRFDKKKFEIEFRGWGESFDTSKHETEADIKSPTYSNMQINEKPERCDIYVIVDI.

Residues Asp-26, Asp-154, and Ile-155 each contribute to the Ca(2+) site.

It belongs to the archease family.

Functionally, component of the tRNA-splicing ligase complex required to facilitate the enzymatic turnover of catalytic subunit RtcB (F16A11.2). The chain is Protein archease-like from Caenorhabditis elegans.